A 221-amino-acid chain; its full sequence is MPGTSELITVAVPKGRLLQESSALFERALGVSPRKLLEGTRKLAADAPEAGLRFISIRAGDVASYVEHGAAEVGIVGLDVLREEPRDLYEPLDLGIGRCTVIVARPKGARPLPRGVAPRVATKYLSLAARHFAAKGVPAEIIPLHGSIEVAPSLGLADTIVDITETGETLRANGLVIEEKVLEVSARLVVNRVALKLHPERLRRLIEALRAAVAAAGAEAR.

Belongs to the ATP phosphoribosyltransferase family. Short subfamily. As to quaternary structure, heteromultimer composed of HisG and HisZ subunits.

The protein resides in the cytoplasm. The catalysed reaction is 1-(5-phospho-beta-D-ribosyl)-ATP + diphosphate = 5-phospho-alpha-D-ribose 1-diphosphate + ATP. Its pathway is amino-acid biosynthesis; L-histidine biosynthesis; L-histidine from 5-phospho-alpha-D-ribose 1-diphosphate: step 1/9. Its function is as follows. Catalyzes the condensation of ATP and 5-phosphoribose 1-diphosphate to form N'-(5'-phosphoribosyl)-ATP (PR-ATP). Has a crucial role in the pathway because the rate of histidine biosynthesis seems to be controlled primarily by regulation of HisG enzymatic activity. The polypeptide is ATP phosphoribosyltransferase (Anaeromyxobacter sp. (strain K)).